We begin with the raw amino-acid sequence, 275 residues long: Putative phosphoenolpyruvate synthase regulatory protein (275 aa).

Residue 157–164 (GVSRCGKT) coordinates ADP.

The protein belongs to the pyruvate, phosphate/water dikinase regulatory protein family. PSRP subfamily.

The enzyme catalyses [pyruvate, water dikinase] + ADP = [pyruvate, water dikinase]-phosphate + AMP + H(+). The catalysed reaction is [pyruvate, water dikinase]-phosphate + phosphate + H(+) = [pyruvate, water dikinase] + diphosphate. Its function is as follows. Bifunctional serine/threonine kinase and phosphorylase involved in the regulation of the phosphoenolpyruvate synthase (PEPS) by catalyzing its phosphorylation/dephosphorylation. The polypeptide is Putative phosphoenolpyruvate synthase regulatory protein (Bordetella pertussis (strain Tohama I / ATCC BAA-589 / NCTC 13251)).